The primary structure comprises 697 residues: Elongation factor G (697 aa).

A tr-type G domain is found at glutamate 6–isoleucine 281. Residues alanine 15–threonine 22, aspartate 79–histidine 83, and asparagine 133–aspartate 136 each bind GTP.

Belongs to the TRAFAC class translation factor GTPase superfamily. Classic translation factor GTPase family. EF-G/EF-2 subfamily.

Its subcellular location is the cytoplasm. Functionally, catalyzes the GTP-dependent ribosomal translocation step during translation elongation. During this step, the ribosome changes from the pre-translocational (PRE) to the post-translocational (POST) state as the newly formed A-site-bound peptidyl-tRNA and P-site-bound deacylated tRNA move to the P and E sites, respectively. Catalyzes the coordinated movement of the two tRNA molecules, the mRNA and conformational changes in the ribosome. The sequence is that of Elongation factor G from Rickettsia bellii (strain OSU 85-389).